A 470-amino-acid chain; its full sequence is 4-O-methyltransferase 1 (470 aa).

S-adenosyl-L-methionine-binding positions include 274 to 275, Asp297, 328 to 329, and Lys344; these read GG and DC. His348 acts as the Proton acceptor in catalysis.

Belongs to the class I-like SAM-binding methyltransferase superfamily. Cation-independent O-methyltransferase family. COMT subfamily.

Functionally, S-adenosyl-L-methionine-dependent methyltransferase that preferentially catalyzes the methylation of 4-OH phenolic compounds like coniferyl alcohol, vanillyl alcohol and ferrulic acid. May play a role in promoting lignin degradation by methylating and inactivating free-hydroxyl phenolic compounds, products of lignin cleavage which are known inhibitors of lignin peroxidases. This Phanerochaete chrysosporium (strain RP-78 / ATCC MYA-4764 / FGSC 9002) (White-rot fungus) protein is 4-O-methyltransferase 1.